A 260-amino-acid polypeptide reads, in one-letter code: Meiotic recombination protein rec6 (260 aa).

Positions Q197–A222 are disordered. The segment covering S199–S213 has biased composition (low complexity).

It belongs to the TOP6B-like family. In terms of assembly, component of the DSB catalytic core (DSBC) complex, composed of at least rec12, rec6 and rec14. The complex interacts with mde2.

Functionally, required for formation of the rec12-mediated double-strand breaks (DSBs) that initiate meiotic recombination. May be involved primarily in the early steps of meiotic recombination. The chain is Meiotic recombination protein rec6 from Schizosaccharomyces pombe (strain 972 / ATCC 24843) (Fission yeast).